The following is a 301-amino-acid chain: 2-dehydropantoate 2-reductase (301 aa).

NADP(+)-binding positions include 7–12 (GAGAIG), Lys74, Asn99, and Ala123. Lys179 (proton donor) is an active-site residue. Substrate is bound by residues Lys179, Asn183, Asn187, Asn197, and 246-249 (NYNS). Residue Glu261 coordinates NADP(+).

This sequence belongs to the ketopantoate reductase family.

It localises to the cytoplasm. It carries out the reaction (R)-pantoate + NAD(+) = 2-dehydropantoate + NADH + H(+). The enzyme catalyses (R)-pantoate + NADP(+) = 2-dehydropantoate + NADPH + H(+). The protein operates within cofactor biosynthesis; coenzyme A biosynthesis. In terms of biological role, catalyzes the NAD(P)H-dependent reduction of ketopantoate into pantoic acid. The sequence is that of 2-dehydropantoate 2-reductase from Pyrococcus horikoshii (strain ATCC 700860 / DSM 12428 / JCM 9974 / NBRC 100139 / OT-3).